The following is a 199-amino-acid chain: Recombination protein RecR (199 aa).

A C4-type zinc finger spans residues 57 to 72 (CQSCRTYTEESLCPIC). The region spanning 81–176 (STICVVETPA…VISRIAHGVP (96 aa)) is the Toprim domain.

The protein belongs to the RecR family.

In terms of biological role, may play a role in DNA repair. It seems to be involved in an RecBC-independent recombinational process of DNA repair. It may act with RecF and RecO. The chain is Recombination protein RecR from Shewanella sp. (strain MR-4).